Reading from the N-terminus, the 81-residue chain is Cytochrome c oxidase subunit 7A1, mitochondrial (81 aa).

The transit peptide at 1–21 directs the protein to the mitochondrion; it reads MRHLLGLPQLASRAFSTTVRQ. Residues 51–72 form a helical membrane-spanning segment; it reads ILYRLTMTLTVVGTGYSLYWLL.

This sequence belongs to the cytochrome c oxidase VIIa family. In terms of assembly, component of the complex IV (CIV, cytochrome c oxidase). The complex exists as a monomer or a dimer and forms supercomplexes (SCs) in the inner mitochondrial membrane with NADH-ubiquinone oxidoreductase (complex I, CI) and ubiquinol-cytochrome c oxidoreductase (cytochrome b-c1 complex, complex III, CIII), resulting in different assemblies (supercomplex SCI(1)III(2)IV(1) and megacomplex MCI(2)III(2)IV(2)).

The protein localises to the mitochondrion inner membrane. Its pathway is energy metabolism; oxidative phosphorylation. Its function is as follows. Component of the mitochondrial respiratory complex IV (CIV, also named cytochrome c oxidase complex), the last enzyme in the mitochondrial electron transport chain which drives oxidative phosphorylation. The CIV complex is the component of the respiratory chain that catalyzes the reduction of oxygen to water. Acts as an assembly factor that specifically drives the homodimerization of CIV complexes, mediating the formation of mitochondrial respiratory supercomplexes (respirasomes) containing two CIV: supercomplxes with two molecules of CIV show improved activity. This chain is Cytochrome c oxidase subunit 7A1, mitochondrial, found in Danio rerio (Zebrafish).